We begin with the raw amino-acid sequence, 165 residues long: uncharacterized protein (165 aa).

Residues 76-161 (LEQVESALDD…LKRLIREKLT (86 aa)) enclose the RCK C-terminal domain.

This is an uncharacterized protein from Bacillus subtilis (strain 168).